A 404-amino-acid polypeptide reads, in one-letter code: Probable tRNA sulfurtransferase (404 aa).

In terms of domain architecture, THUMP spans 60 to 165 (TAVAESLKQV…EEAAYLSYET (106 aa)). ATP is bound by residues 183–184 (ML), 208–209 (HF), Arg265, Gly287, and Gln296.

This sequence belongs to the ThiI family.

The protein localises to the cytoplasm. It carries out the reaction [ThiI sulfur-carrier protein]-S-sulfanyl-L-cysteine + a uridine in tRNA + 2 reduced [2Fe-2S]-[ferredoxin] + ATP + H(+) = [ThiI sulfur-carrier protein]-L-cysteine + a 4-thiouridine in tRNA + 2 oxidized [2Fe-2S]-[ferredoxin] + AMP + diphosphate. The enzyme catalyses [ThiS sulfur-carrier protein]-C-terminal Gly-Gly-AMP + S-sulfanyl-L-cysteinyl-[cysteine desulfurase] + AH2 = [ThiS sulfur-carrier protein]-C-terminal-Gly-aminoethanethioate + L-cysteinyl-[cysteine desulfurase] + A + AMP + 2 H(+). Its pathway is cofactor biosynthesis; thiamine diphosphate biosynthesis. Functionally, catalyzes the ATP-dependent transfer of a sulfur to tRNA to produce 4-thiouridine in position 8 of tRNAs, which functions as a near-UV photosensor. Also catalyzes the transfer of sulfur to the sulfur carrier protein ThiS, forming ThiS-thiocarboxylate. This is a step in the synthesis of thiazole, in the thiamine biosynthesis pathway. The sulfur is donated as persulfide by IscS. The protein is Probable tRNA sulfurtransferase of Streptococcus pneumoniae serotype 19F (strain G54).